The sequence spans 209 residues: Octanoyltransferase (209 aa).

A BPL/LPL catalytic domain is found at 30-209; the sequence is DNEPEIVYLV…IQTEFNKIFK (180 aa). Substrate is bound by residues 69–76, 143–145, and 156–158; these read RGGKFTFH, AIG, and GVA. Catalysis depends on cysteine 174, which acts as the Acyl-thioester intermediate.

It belongs to the LipB family.

The protein resides in the cytoplasm. It catalyses the reaction octanoyl-[ACP] + L-lysyl-[protein] = N(6)-octanoyl-L-lysyl-[protein] + holo-[ACP] + H(+). Its pathway is protein modification; protein lipoylation via endogenous pathway; protein N(6)-(lipoyl)lysine from octanoyl-[acyl-carrier-protein]: step 1/2. Functionally, catalyzes the transfer of endogenously produced octanoic acid from octanoyl-acyl-carrier-protein onto the lipoyl domains of lipoate-dependent enzymes. Lipoyl-ACP can also act as a substrate although octanoyl-ACP is likely to be the physiological substrate. In Rickettsia felis (strain ATCC VR-1525 / URRWXCal2) (Rickettsia azadi), this protein is Octanoyltransferase.